The primary structure comprises 191 residues: UPF0312 protein Sputw3181_1309 (191 aa).

The first 22 residues, 1–22 (MKKQLLSALIGVSLLVPMAASA), serve as a signal peptide directing secretion.

It belongs to the UPF0312 family. Type 1 subfamily.

It localises to the periplasm. This is UPF0312 protein Sputw3181_1309 from Shewanella sp. (strain W3-18-1).